The following is a 197-amino-acid chain: Phosphoheptose isomerase (197 aa).

In terms of domain architecture, SIS spans 34–196; that stretch reads MVQCLLGGNK…DRTLFPQDDQ (163 aa). Substrate is bound at residue 49-51; that stretch reads NGG. 2 residues coordinate Zn(2+): H58 and E62. Substrate is bound by residues E62, 91–92, 117–119, S122, and Q172; these read ND and STS. Q172 and H180 together coordinate Zn(2+).

This sequence belongs to the SIS family. GmhA subfamily. As to quaternary structure, homotetramer. Requires Zn(2+) as cofactor.

It is found in the cytoplasm. It catalyses the reaction 2 D-sedoheptulose 7-phosphate = D-glycero-alpha-D-manno-heptose 7-phosphate + D-glycero-beta-D-manno-heptose 7-phosphate. Its pathway is carbohydrate biosynthesis; D-glycero-D-manno-heptose 7-phosphate biosynthesis; D-glycero-alpha-D-manno-heptose 7-phosphate and D-glycero-beta-D-manno-heptose 7-phosphate from sedoheptulose 7-phosphate: step 1/1. Functionally, catalyzes the isomerization of sedoheptulose 7-phosphate in D-glycero-D-manno-heptose 7-phosphate. The protein is Phosphoheptose isomerase of Shewanella loihica (strain ATCC BAA-1088 / PV-4).